An 80-amino-acid chain; its full sequence is Putative membrane protein insertion efficiency factor (80 aa).

It belongs to the UPF0161 family.

It is found in the cell inner membrane. Functionally, could be involved in insertion of integral membrane proteins into the membrane. In Paracoccus denitrificans (strain Pd 1222), this protein is Putative membrane protein insertion efficiency factor.